We begin with the raw amino-acid sequence, 462 residues long: Argininosuccinate lyase (462 aa).

This sequence belongs to the lyase 1 family. Argininosuccinate lyase subfamily.

The protein localises to the cytoplasm. The catalysed reaction is 2-(N(omega)-L-arginino)succinate = fumarate + L-arginine. It participates in amino-acid biosynthesis; L-arginine biosynthesis; L-arginine from L-ornithine and carbamoyl phosphate: step 3/3. This chain is Argininosuccinate lyase, found in Methylobacterium nodulans (strain LMG 21967 / CNCM I-2342 / ORS 2060).